Consider the following 543-residue polypeptide: Keratin, type II cytoskeletal 75 (543 aa).

Polar residues predominate over residues 1-16; that stretch reads MSRQSTITFQTSSRRG. The disordered stretch occupies residues 1-48; that stretch reads MSRQSTITFQTSSRRGFSTASATTPATSRSRFSSASVTHSPAGSGGLG. The interval 1-144 is head; the sequence is MSRQSTITFQ…DPNIQRVRKE (144 aa). The segment covering 17–36 has biased composition (low complexity); it reads FSTASATTPATSRSRFSSAS. Residues 145–180 form a coil 1A region; that stretch reads EREQIKTLNNKFASFIDKVRFLEQQNKVLETKWSLL. In terms of domain architecture, IF rod spans 145-458; that stretch reads EREQIKTLNN…KLLEGEECRL (314 aa). The tract at residues 181–199 is linker 1; it reads QEQGTRTVRQSLEPFFEAY. The coil 1B stretch occupies residues 200–292; it reads ITDLRRQLDS…LFEAELCQMQ (93 aa). Residues 293–315 are linker 12; it reads TRVSDTSVVLSMDNNRSLDLDSI. Residues 316–454 form a coil 2 region; it reads IAEVKAQYEE…ATYRKLLEGE (139 aa). The tract at residues 455–543 is tail; it reads ECRLSGEGVS…TSSSRKSYKH (89 aa). The interval 511-543 is disordered; the sequence is SSFSNSSSRGLGGSGSSFKFVSTTSSSRKSYKH. Over residues 526–543 the composition is skewed to low complexity; the sequence is SSFKFVSTTSSSRKSYKH.

This sequence belongs to the intermediate filament family. In terms of assembly, heterodimer of a type I and a type II keratin. May associate with KRT17.

Its function is as follows. Plays a central role in hair and nail formation. Essential component of keratin intermediate filaments in the companion layer of the hair follicle. This Bos taurus (Bovine) protein is Keratin, type II cytoskeletal 75 (KRT75).